Consider the following 215-residue polypeptide: Ribonuclease T (215 aa).

Positions 20 to 194 constitute an Exonuclease domain; the sequence is VVIDVETAGF…YDTERTAVLF (175 aa). Positions 23, 25, 181, and 186 each coordinate Mg(2+). Catalysis depends on histidine 181, which acts as the Proton donor/acceptor.

The protein belongs to the RNase T family. In terms of assembly, homodimer. Mg(2+) is required as a cofactor.

Its function is as follows. Trims short 3' overhangs of a variety of RNA species, leaving a one or two nucleotide 3' overhang. Responsible for the end-turnover of tRNA: specifically removes the terminal AMP residue from uncharged tRNA (tRNA-C-C-A). Also appears to be involved in tRNA biosynthesis. The protein is Ribonuclease T of Salmonella choleraesuis (strain SC-B67).